Reading from the N-terminus, the 418-residue chain is MTYLEIEGTNHLSGNVTISGAKNAALPLIVSSILAKNEVKINNVPNVADIKTLISLLENLGAKVNFQNNSALLNTNTLNQTIAKYDIVRKMRASILTLGPLLARFGHCEVSLPGGCAIGQRPIDLHLLALEKMGANIQIKQGYVVASGNLKGNEILFDKITVTGSENIIMAAALAKGKTKLLNVAKEPEVVQLCEVLKDAGLEIKGIGTDELEIYGSDGELLEFKEFSVIPDRIEAGTYLCAGAITNSKITLDKVNATHLSAVLAKLHQMGFETLITEDSITLLPAKEIKPVEIMTSEYPGFPTDMQAQFMALALKANGTSIIDERLFENRFMHVSELLRMGADIKLNGHIATIVGGKELNAADVMATDLRASSALILAALAAKGTSKVHRIYHLDRGYENLEEKFKDLGAKITRLEE.

Residue Lys-22–Asn-23 participates in phosphoenolpyruvate binding. Residue Arg-92 coordinates UDP-N-acetyl-alpha-D-glucosamine. Cys-116 acts as the Proton donor in catalysis. A 2-(S-cysteinyl)pyruvic acid O-phosphothioketal modification is found at Cys-116. Residues Arg-121 to Leu-125, Asp-305, and Leu-327 contribute to the UDP-N-acetyl-alpha-D-glucosamine site.

Belongs to the EPSP synthase family. MurA subfamily.

The protein resides in the cytoplasm. It catalyses the reaction phosphoenolpyruvate + UDP-N-acetyl-alpha-D-glucosamine = UDP-N-acetyl-3-O-(1-carboxyvinyl)-alpha-D-glucosamine + phosphate. It functions in the pathway cell wall biogenesis; peptidoglycan biosynthesis. Cell wall formation. Adds enolpyruvyl to UDP-N-acetylglucosamine. This is UDP-N-acetylglucosamine 1-carboxyvinyltransferase from Campylobacter jejuni subsp. jejuni serotype O:23/36 (strain 81-176).